A 324-amino-acid chain; its full sequence is Phospho-N-acetylmuramoyl-pentapeptide-transferase (324 aa).

Helical transmembrane passes span V13 to P33, G57 to I77, G85 to L105, M121 to T141, I143 to V163, I179 to F199, T201 to L221, L238 to V260, and V303 to A323.

This sequence belongs to the glycosyltransferase 4 family. MraY subfamily. Mg(2+) is required as a cofactor.

Its subcellular location is the cell membrane. It catalyses the reaction UDP-N-acetyl-alpha-D-muramoyl-L-alanyl-gamma-D-glutamyl-meso-2,6-diaminopimeloyl-D-alanyl-D-alanine + di-trans,octa-cis-undecaprenyl phosphate = di-trans,octa-cis-undecaprenyl diphospho-N-acetyl-alpha-D-muramoyl-L-alanyl-D-glutamyl-meso-2,6-diaminopimeloyl-D-alanyl-D-alanine + UMP. It participates in cell wall biogenesis; peptidoglycan biosynthesis. In terms of biological role, catalyzes the initial step of the lipid cycle reactions in the biosynthesis of the cell wall peptidoglycan: transfers peptidoglycan precursor phospho-MurNAc-pentapeptide from UDP-MurNAc-pentapeptide onto the lipid carrier undecaprenyl phosphate, yielding undecaprenyl-pyrophosphoryl-MurNAc-pentapeptide, known as lipid I. The chain is Phospho-N-acetylmuramoyl-pentapeptide-transferase from Clostridium botulinum (strain Eklund 17B / Type B).